A 339-amino-acid chain; its full sequence is Protein FAM76B (339 aa).

Ala-2 bears the N-acetylalanine mark. Phosphoserine occurs at positions 22 and 148. The tract at residues 144-243 is disordered; the sequence is EQRKSLGSSH…INQSADSGGT (100 aa). A compositionally biased stretch (low complexity) spans 148-160; sequence SLGSSHSNSSSSS. Positions 167-189 are enriched in basic residues; the sequence is HHPKHHHHHHHHHHRHSSSHHKI. Ser-193 is modified (phosphoserine). Thr-215 bears the Phosphothreonine mark. The segment covering 215 to 224 has biased composition (basic and acidic residues); it reads TPKKKPKLES. A compositionally biased stretch (polar residues) spans 228–243; the sequence is NGDSSSINQSADSGGT. A coiled-coil region spans residues 248 to 328; that stretch reads LISQLKEEVM…QVAALSKGKK (81 aa).

It belongs to the FAM76 family. Interacts with HNRNPA2B1 (via C-terminus); the interaction results in retention of HNRNPA2B1 in the nucleus and inhibition of the NF-kappa-B-mediated inflammatory pathway.

The protein resides in the nucleus speckle. Negatively regulates the NF-kappa-B-mediated inflammatory pathway by preventing the translocation of HNRNPA2B1 from the nucleus to the cytoplasm. Inhibits the PI3K/Akt/NF-kappa-B pathway-mediated polarization of M1 macrophages by binding to and stabilizing PIK3CD mRNA, resulting in increased levels of PIK3CD protein and increased levels of phosphorylated downstream target AKT which leads to decreased NF-kappa-B signaling. The chain is Protein FAM76B (FAM76B) from Homo sapiens (Human).